The chain runs to 422 residues: Adenosylhomocysteinase (422 aa).

Positions 129 and 154 each coordinate substrate. 155 to 157 (TTT) serves as a coordination point for NAD(+). Lysine 184 and aspartate 188 together coordinate substrate. NAD(+) contacts are provided by residues asparagine 189, 218–223 (GYGWCG), glutamate 241, asparagine 276, 297–299 (AGH), and asparagine 344.

It belongs to the adenosylhomocysteinase family. It depends on NAD(+) as a cofactor.

It is found in the cytoplasm. The enzyme catalyses S-adenosyl-L-homocysteine + H2O = L-homocysteine + adenosine. Its pathway is amino-acid biosynthesis; L-homocysteine biosynthesis; L-homocysteine from S-adenosyl-L-homocysteine: step 1/1. May play a key role in the regulation of the intracellular concentration of adenosylhomocysteine. This chain is Adenosylhomocysteinase, found in Pyrococcus abyssi (strain GE5 / Orsay).